A 337-amino-acid chain; its full sequence is Palmitoyltransferase ZDHHC15 (337 aa).

At 1–20 (MRRGWKMALSGGLRCCRRVL) the chain is on the cytoplasmic side. Residues 21-41 (SWVPVLVIVLVVLWSYYAYVF) traverse the membrane as a helical segment. Residues 42-56 (ELCLVTVLSPAEKVI) lie on the Lumenal side of the membrane. The chain crosses the membrane as a helical span at residues 57–77 (YLILYHAIFVFFAWTYWKSIF). The Cytoplasmic portion of the chain corresponds to 78-172 (TLPQQPNQKF…NNCIGFSNYK (95 aa)). A DHHC domain is found at 129-179 (RFCDRCHLIKPDRCHHCSVCAMCVLKMDHHCPWVNNCIGFSNYKFFLQFLA). Residues Cys131, Cys134, His144, Cys145, Cys148, Cys151, and His158 each contribute to the Zn(2+) site. The active-site S-palmitoyl cysteine intermediate is the Cys159. Cys165 is a binding site for Zn(2+). A helical transmembrane segment spans residues 173–193 (FFLQFLAYSVLYCLYIATTVF). At 194–210 (SYFIKYWRGELPSVRSK) the chain is on the lumenal side. The chain crosses the membrane as a helical span at residues 211-234 (FHVLFLLFVACMFFVSLVILFGYH). Residues 235–337 (CWLVSRNKTT…LSSLAVESET (103 aa)) are Cytoplasmic-facing. The disordered stretch occupies residues 293-337 (HSFPMRSMNESQNPLLANEEPWEDNEDESQDYPEGLSSLAVESET). Positions 312 to 323 (EPWEDNEDESQD) are enriched in acidic residues.

It belongs to the DHHC palmitoyltransferase family. Autopalmitoylated (in vitro). As to expression, in brain, expressed in both excitatory and inhibitory neurons but not expressed by glial cells.

The protein localises to the golgi apparatus membrane. Its subcellular location is the postsynaptic density. It carries out the reaction L-cysteinyl-[protein] + hexadecanoyl-CoA = S-hexadecanoyl-L-cysteinyl-[protein] + CoA. The enzyme catalyses L-cysteinyl-[protein] + tetradecanoyl-CoA = S-tetradecanoyl-L-cysteinyl-[protein] + CoA. The catalysed reaction is L-cysteinyl-[protein] + octadecanoyl-CoA = S-octadecanoyl-L-cysteinyl-[protein] + CoA. Its function is as follows. Palmitoyltransferase that catalyzes the addition of palmitate onto various protein substrates. Has no stringent fatty acid selectivity and in addition to palmitate can also transfer onto target proteins myristate from tetradecanoyl-CoA and stearate from octadecanoyl-CoA. Palmitoylates IGF2R and SORT1, promoting their partitioning to an endosomal membrane subdomain where they can interact with the retromer cargo-selective complex. Thereby, regulates retrograde transport from endosomes to the Golgi apparatus of these lysosomal sorting receptors and plays a role in trafficking of lysosomal proteins. In the nervous system, catalyzes the palmitoylation of DLG4/PSD95 and regulates its synaptic clustering and function in synaptogenesis. Could be involved in the differentiation of dopaminergic neurons and the development of the diencephalon. Could also catalyze the palmitoylation of GAP43. Could also palmitoylate DNAJC5 and regulate its localization to the Golgi membrane. Could also palmitoylate FYN as shown in vitro. May palmitoylate CALHM3 subunit of gustatory voltage-gated ion channels and modulate channel gating and kinetics. The sequence is that of Palmitoyltransferase ZDHHC15 from Rattus norvegicus (Rat).